Here is a 252-residue protein sequence, read N- to C-terminus: Probable transcriptional regulatory protein RF_0799 (252 aa).

Residues methionine 1 to arginine 21 form a disordered region.

It belongs to the TACO1 family.

The protein resides in the cytoplasm. The chain is Probable transcriptional regulatory protein RF_0799 from Rickettsia felis (strain ATCC VR-1525 / URRWXCal2) (Rickettsia azadi).